The primary structure comprises 394 residues: Elongation factor Tu (394 aa).

In terms of domain architecture, tr-type G spans 10–205 (KPHMNVGTIG…SMDNYFDLPE (196 aa)). The segment at 19 to 26 (GHVDHGKT) is G1. 19 to 26 (GHVDHGKT) contacts GTP. Thr26 serves as a coordination point for Mg(2+). Residues 61–65 (GITIN) are G2. Positions 82–85 (DCPG) are G3. Residues 82–86 (DCPGH) and 137–140 (NKLD) each bind GTP. The G4 stretch occupies residues 137-140 (NKLD). Residues 173–175 (SAF) are G5.

It belongs to the TRAFAC class translation factor GTPase superfamily. Classic translation factor GTPase family. EF-Tu/EF-1A subfamily. As to quaternary structure, monomer.

Its subcellular location is the cytoplasm. It carries out the reaction GTP + H2O = GDP + phosphate + H(+). Functionally, GTP hydrolase that promotes the GTP-dependent binding of aminoacyl-tRNA to the A-site of ribosomes during protein biosynthesis. The chain is Elongation factor Tu from Borreliella burgdorferi (strain ATCC 35210 / DSM 4680 / CIP 102532 / B31) (Borrelia burgdorferi).